Here is a 227-residue protein sequence, read N- to C-terminus: uncharacterized protein (227 aa).

The Response regulatory domain occupies 2–115; the sequence is KILMIEDNVS…TLVARIKAVI (114 aa). Aspartate 51 carries the 4-aspartylphosphate modification. Positions 128 to 226 form a DNA-binding region, ompR/PhoB-type; that stretch reads EDMIETECFT…VWGVGYKFDE (99 aa).

In terms of processing, phosphorylated by YclK.

The protein resides in the cytoplasm. Functionally, could be member of the two-component regulatory system YclK/YclJ. This is an uncharacterized protein from Bacillus subtilis (strain 168).